The primary structure comprises 227 residues: Putative methylase YubD (227 aa).

It belongs to the N(4)/N(6)-methyltransferase family.

Functionally, a putative beta subtype methylase whose recognition site is unknown. The protein is Putative methylase YubD (yubD) of Escherichia coli (strain K12).